The following is a 95-amino-acid chain: Phosphoribosyl-ATP pyrophosphatase (95 aa).

The protein belongs to the PRA-PH family.

It localises to the cytoplasm. It catalyses the reaction 1-(5-phospho-beta-D-ribosyl)-ATP + H2O = 1-(5-phospho-beta-D-ribosyl)-5'-AMP + diphosphate + H(+). The protein operates within amino-acid biosynthesis; L-histidine biosynthesis; L-histidine from 5-phospho-alpha-D-ribose 1-diphosphate: step 2/9. This Methanosphaera stadtmanae (strain ATCC 43021 / DSM 3091 / JCM 11832 / MCB-3) protein is Phosphoribosyl-ATP pyrophosphatase.